Consider the following 90-residue polypeptide: Small ribosomal subunit protein uS15 (90 aa).

Belongs to the universal ribosomal protein uS15 family. As to quaternary structure, part of the 30S ribosomal subunit. Forms a bridge to the 50S subunit in the 70S ribosome, contacting the 23S rRNA.

Functionally, one of the primary rRNA binding proteins, it binds directly to 16S rRNA where it helps nucleate assembly of the platform of the 30S subunit by binding and bridging several RNA helices of the 16S rRNA. Forms an intersubunit bridge (bridge B4) with the 23S rRNA of the 50S subunit in the ribosome. The protein is Small ribosomal subunit protein uS15 of Aliarcobacter butzleri (strain RM4018) (Arcobacter butzleri).